Here is a 553-residue protein sequence, read N- to C-terminus: MSDIALTVSILALVAVVGLFIGNVKFRGIGLGIGGVLFGGIIVGHFVSQAGMTLSSDMLHVIQEFGLILFVYTIGIQVGPGFFASLRVSGLRLNLFAVLIVIIGGLVTAILHKLFDIPLPVVLGIFSGAVTNTPALGAGQQILRDLGTPMEMVDQMGMSYAMAYPFGICGILFTMWMLRVIFRVNVETEAQQHESSRTNGGALIKTINIRVENPNLHDLAIKDVPILNGDKIICSRLKREETLKVPSPDTIIQLGDLLHLVGQPADLHNAQLVIGQEVDTSLSTKGTDLRVERVVVTNENVLGKRIRDLHFKERYDVVISRLNRAGVELVASGDISLQFGDILNLVGRPSAIDAVANVLGNAQQKLQQVQMLPVFIGIGLGVLLGSIPVFVPGFPAALKLGLAGGPLIMALILGRIGSIGKLYWFMPPSANLALRELGIVLFLSVVGLKSGGDFVNTLVNGEGLSWIGYGALITAVPLITVGILARMLAKMNYLTMCGMLAGSMTDPPALAFANNLHPTSGAAALSYATVYPLVMFLRIITPQLLAVLFWSIG.

5 consecutive transmembrane segments (helical) span residues 4 to 24 (IALT…IGNV), 28 to 48 (GIGL…HFVS), 65 to 85 (FGLI…FFAS), 95 to 115 (LFAV…HKLF), and 158 to 178 (MSYA…MWML). 2 consecutive RCK C-terminal domains span residues 191–276 (QQHE…VIGQ) and 279–361 (DTSL…VLGN). 6 consecutive transmembrane segments (helical) span residues 371–391 (MLPV…PVFV), 393–413 (GFPA…ALIL), 439–459 (IVLF…NTLV), 464–484 (LSWI…VGIL), 493–513 (YLTM…LAFA), and 533–553 (LVMF…WSIG).

It belongs to the AAE transporter (TC 2.A.81) family. YidE subfamily.

It is found in the cell membrane. The protein is Putative transport protein YidE of Escherichia coli (strain ATCC 8739 / DSM 1576 / NBRC 3972 / NCIMB 8545 / WDCM 00012 / Crooks).